We begin with the raw amino-acid sequence, 397 residues long: Phosphoglycerate kinase (397 aa).

Residues 21-23 (DFN), arginine 36, 59-62 (HLGR), arginine 119, and arginine 156 contribute to the substrate site. ATP contacts are provided by residues lysine 207, glycine 295, glutamate 326, and 353-356 (GGDS).

Belongs to the phosphoglycerate kinase family. As to quaternary structure, monomer.

It localises to the cytoplasm. The catalysed reaction is (2R)-3-phosphoglycerate + ATP = (2R)-3-phospho-glyceroyl phosphate + ADP. The protein operates within carbohydrate degradation; glycolysis; pyruvate from D-glyceraldehyde 3-phosphate: step 2/5. The polypeptide is Phosphoglycerate kinase (Enterococcus faecalis (strain ATCC 700802 / V583)).